Here is a 437-residue protein sequence, read N- to C-terminus: Replication factor C large subunit (437 aa).

An ATP-binding site is contributed by 48–55 (GPPGVGKT). The disordered stretch occupies residues 410–437 (TQASKPTSEEKAEKSKKYYPKRSSSRKT). Basic and acidic residues predominate over residues 416-425 (TSEEKAEKSK). The segment covering 426–437 (KYYPKRSSSRKT) has biased composition (basic residues).

The protein belongs to the activator 1 small subunits family. RfcL subfamily. In terms of assembly, heteromultimer composed of small subunits (RfcS) and large subunits (RfcL).

In terms of biological role, part of the RFC clamp loader complex which loads the PCNA sliding clamp onto DNA. This chain is Replication factor C large subunit, found in Sulfolobus acidocaldarius (strain ATCC 33909 / DSM 639 / JCM 8929 / NBRC 15157 / NCIMB 11770).